The chain runs to 1581 residues: Maestro heat-like repeat-containing protein family member 2B (1581 aa).

16 HEAT repeats span residues 123-160 (FMMMTLLTMQTMLRLVEDENMRQTFCIALENFSKSIYK), 305-342 (ANPVDLLDFFDEQIRSTNEAVRTGILTLLRSTINAEEP), 401-441 (MSNR…LVIG), 464-501 (DYLFNIIRILIMAEEKKKRDIQESTALVVSTGAVKLPS), 526-543 (AIGLLKIMPEIIHPKLAE), 544-580 (MWKTRMPALLQPLEGSNASIVLWETMLLQLLKESLWK), 658-695 (ENHLDIVLNVLKTFQDKEKFFVNRCKGIFSGKKSLTKT), 773-815 (TYKE…LKPA), 960-997 (CQEVDRLQGLQEGLDSEDEQVQIKISSKIAKIVCKFIP), 1017-1055 (PLCTKACGIWMIAALKEHGALLEDQLLEILSTIYHHMPV), 1112-1150 (KLMRALIKKLVARLEDDIAGTEAISVACAIYEVILTGAH), 1153-1191 (HLYPELFTLLLKLVSCSLGQKMPMSTLSQRRRVMQLGER), 1254-1291 (GVILDIMEHLLSSLTSSSENYRITGMAFFSELMKEPIL), 1295-1332 (GNLRDVLIFMDQNARDSNAILRQMAIRGLGNTACGAPH), 1359-1379 (CESLKALKKILELLTERDINF), and 1380-1416 (YFKEIVLQTRTFFEDEQDDVRLTAISLFEDLATLTGR).

Found in a complex at least composed of MROH2B isoform 2, PRKACA isoform 2 and TCP11. Interacts with PRKACA isoform 2. Interacts with TCP11. In terms of processing, constitutively phosphorylated on serine and threonine residues in acrosomal region of the sperm head, midpiece and flagellar regions of noncapacitated spermatozoa. Phosphorylation on tyrosine residues increases upon sperm capacitation within the acrosomal and tail regions in a protein kinase A (PKA)-dependent signaling pathway. As to expression, expressed strongly in round spermatids and fully mature spermatozoa. Expressed weakly in pachytene spermatocytes (at protein level). Isoform 2 is specifically expressed in the testis. Isoform 2 is expressed in pachytene spermatocytes and round spermatids. Isoform 3 is weakly expressed in testis.

The protein localises to the cytoplasm. It is found in the cytoplasmic vesicle. The protein resides in the secretory vesicle. Its subcellular location is the acrosome. It localises to the cell projection. The protein localises to the cilium. It is found in the flagellum. May play a role in the process of sperm capacitation. The polypeptide is Maestro heat-like repeat-containing protein family member 2B (Mus musculus (Mouse)).